The following is an 82-amino-acid chain: MNRLMILVFAAVFLALASADEDVDIAKRGIPCLCVSDGPSTRGNKLSGTIWMKTGGYGGNGCPKGWHFCGKSRGLLSDCCKQ.

Residues 1 to 19 form the signal peptide; that stretch reads MNRLMILVFAAVFLALASA. The propeptide occupies 20–26; it reads DEDVDIA. Intrachain disulfides connect Cys32-Cys79, Cys34-Cys69, and Cys62-Cys80.

The protein belongs to the sea anemone sodium channel inhibitory toxin family. Type I subfamily.

The protein resides in the secreted. Its subcellular location is the nematocyst. Functionally, binds specifically to voltage-gated sodium channels (Nav), thereby delaying their inactivation during signal transduction. Causes death to crabs (minimum lethal dose of 25 ug/kg) and mice. The chain is Delta-actitoxin-Aeq2a from Actinia equina (Beadlet anemone).